A 360-amino-acid chain; its full sequence is Membrane-bound lytic murein transglycosylase C (360 aa).

Residues 1–16 (MKKLLALAVIAPLLIS) form the signal peptide. Cys-17 carries N-palmitoyl cysteine lipidation. A lipid anchor (S-diacylglycerol cysteine) is attached at Cys-17.

Belongs to the transglycosylase Slt family.

The protein localises to the cell outer membrane. The catalysed reaction is Exolytic cleavage of the (1-&gt;4)-beta-glycosidic linkage between N-acetylmuramic acid (MurNAc) and N-acetylglucosamine (GlcNAc) residues in peptidoglycan, from either the reducing or the non-reducing ends of the peptidoglycan chains, with concomitant formation of a 1,6-anhydrobond in the MurNAc residue.. Functionally, murein-degrading enzyme. May play a role in recycling of muropeptides during cell elongation and/or cell division. The chain is Membrane-bound lytic murein transglycosylase C from Salmonella paratyphi A (strain ATCC 9150 / SARB42).